Reading from the N-terminus, the 121-residue chain is Large ribosomal subunit protein bL19 (121 aa).

It belongs to the bacterial ribosomal protein bL19 family.

This protein is located at the 30S-50S ribosomal subunit interface and may play a role in the structure and function of the aminoacyl-tRNA binding site. The chain is Large ribosomal subunit protein bL19 (rplS) from Chlamydia muridarum (strain MoPn / Nigg).